Reading from the N-terminus, the 176-residue chain is Myelin basic protein (176 aa).

Residues 1-11 (MASQKHSRGHG) show a composition bias toward basic residues. The segment at 1-176 (MASQKHSRGH…SRSSSPMARR (176 aa)) is disordered. The residue at position 2 (Ala-2) is an N-acetylalanine. Ser-7 is modified (phosphoserine). Residues Arg-25 and Arg-33 each carry the citrulline modification. Phosphoserine is present on Ser-58. The residue at position 97 (Asn-97) is a Deamidated asparagine. The residue at position 103 (Thr-103) is a Phosphothreonine. Position 108 is a deamidated glutamine (Gln-108). At Arg-111 the chain carries Symmetric dimethylarginine. Ser-117 carries the post-translational modification Phosphoserine. The span at 134–153 (SLEHHKSSYKGYKDPHREGH) shows a compositional bias: basic and acidic residues. Residues 166-176 (RSRSSSPMARR) are compositionally biased toward polar residues. 2 positions are modified to phosphoserine: Ser-167 and Ser-171. Residue Arg-176 is modified to Citrulline.

Belongs to the myelin basic protein family. As to quaternary structure, homodimer. Post-translationally, as in other animals, several charge isomers may be produced as a result of optional post-translational modifications, such as phosphorylation of serine or threonine residues, deamidation of glutamine or asparagine residues, citrullination and methylation of arginine residues.

The protein resides in the myelin membrane. In terms of biological role, is, with PLP, the most abundant protein component of the myelin membrane in the CNS. Plays a role in both the formation and stabilization of this compact multilayer arrangement of bilayers. Each splice variant and charge isomer may have a specialized function in the assembly of an optimized, biochemically functional myelin membrane. The sequence is that of Myelin basic protein (mbp) from Xenopus laevis (African clawed frog).